The sequence spans 237 residues: Segregation and condensation protein A (237 aa).

It belongs to the ScpA family. In terms of assembly, component of a cohesin-like complex composed of ScpA, ScpB and the Smc homodimer, in which ScpA and ScpB bind to the head domain of Smc. The presence of the three proteins is required for the association of the complex with DNA.

The protein resides in the cytoplasm. Participates in chromosomal partition during cell division. May act via the formation of a condensin-like complex containing Smc and ScpB that pull DNA away from mid-cell into both cell halves. This is Segregation and condensation protein A from Streptococcus thermophilus (strain ATCC BAA-250 / LMG 18311).